Here is a 438-residue protein sequence, read N- to C-terminus: Gamma-glutamyl phosphate reductase (438 aa).

It belongs to the gamma-glutamyl phosphate reductase family.

It is found in the cytoplasm. The catalysed reaction is L-glutamate 5-semialdehyde + phosphate + NADP(+) = L-glutamyl 5-phosphate + NADPH + H(+). It participates in amino-acid biosynthesis; L-proline biosynthesis; L-glutamate 5-semialdehyde from L-glutamate: step 2/2. In terms of biological role, catalyzes the NADPH-dependent reduction of L-glutamate 5-phosphate into L-glutamate 5-semialdehyde and phosphate. The product spontaneously undergoes cyclization to form 1-pyrroline-5-carboxylate. This Natronomonas pharaonis (strain ATCC 35678 / DSM 2160 / CIP 103997 / JCM 8858 / NBRC 14720 / NCIMB 2260 / Gabara) (Halobacterium pharaonis) protein is Gamma-glutamyl phosphate reductase.